A 211-amino-acid polypeptide reads, in one-letter code: uncharacterized protein (211 aa).

6 helical membrane passes run 21–38 (WYVI…ASEI), 53–75 (WGMD…YAAV), 82–104 (TAYL…MGVA), 124–146 (IFYA…AANV), 159–178 (PLLI…YWVY), and 188–210 (AVSF…LMEW).

The protein localises to the cell membrane. This is an uncharacterized protein from Archaeoglobus fulgidus (strain ATCC 49558 / DSM 4304 / JCM 9628 / NBRC 100126 / VC-16).